We begin with the raw amino-acid sequence, 280 residues long: Undecaprenyl-diphosphatase (280 aa).

Transmembrane regions (helical) follow at residues 1–21, 40–60, 89–109, 116–136, 146–166, 191–211, 227–247, and 260–280; these read MEWI…FLPI, GAAF…VFFW, WLVV…QNAI, LWIV…ADAV, LTVK…IPGV, FLLA…KIVA, LATV…LKFI, and IALG…ATLS.

This sequence belongs to the UppP family.

Its subcellular location is the cell membrane. It catalyses the reaction di-trans,octa-cis-undecaprenyl diphosphate + H2O = di-trans,octa-cis-undecaprenyl phosphate + phosphate + H(+). Catalyzes the dephosphorylation of undecaprenyl diphosphate (UPP). Confers resistance to bacitracin. The chain is Undecaprenyl-diphosphatase from Renibacterium salmoninarum (strain ATCC 33209 / DSM 20767 / JCM 11484 / NBRC 15589 / NCIMB 2235).